Consider the following 421-residue polypeptide: Gamma-glutamyl phosphate reductase (421 aa).

Belongs to the gamma-glutamyl phosphate reductase family.

Its subcellular location is the cytoplasm. The enzyme catalyses L-glutamate 5-semialdehyde + phosphate + NADP(+) = L-glutamyl 5-phosphate + NADPH + H(+). Its pathway is amino-acid biosynthesis; L-proline biosynthesis; L-glutamate 5-semialdehyde from L-glutamate: step 2/2. Its function is as follows. Catalyzes the NADPH-dependent reduction of L-glutamate 5-phosphate into L-glutamate 5-semialdehyde and phosphate. The product spontaneously undergoes cyclization to form 1-pyrroline-5-carboxylate. The sequence is that of Gamma-glutamyl phosphate reductase from Shewanella pealeana (strain ATCC 700345 / ANG-SQ1).